The following is a 262-amino-acid chain: MDKLSLYGETFTSRLLIGSALYPSPAIMLDSVRASGAEIITLSLRRQNPAQQDGKAIWDYIRSSGCKLLPNTAGCKSAKEAVTLAEMSREIFQTDWLKLEVIGDDYTLQPDPYGLVEAAKELSKRGFKVLPYCTEDLVLCRRLLDAGCEALMPWGAPIGTGQGLLNKYNLGMLRERLPDTPMIIDAGLGAPSHATEAMEMGFDAVLLNTAIAKAHDPVGMGVAFKLAVEAGRAGYNAGLMLKRQTASPSTPTIGMPFWRRHD.

Lys98 (schiff-base intermediate with DXP) is an active-site residue. 1-deoxy-D-xylulose 5-phosphate is bound by residues Gly159, 186–187, and 208–209; these read AG and NT.

The protein belongs to the ThiG family. Homotetramer. Forms heterodimers with either ThiH or ThiS.

The protein resides in the cytoplasm. It carries out the reaction [ThiS sulfur-carrier protein]-C-terminal-Gly-aminoethanethioate + 2-iminoacetate + 1-deoxy-D-xylulose 5-phosphate = [ThiS sulfur-carrier protein]-C-terminal Gly-Gly + 2-[(2R,5Z)-2-carboxy-4-methylthiazol-5(2H)-ylidene]ethyl phosphate + 2 H2O + H(+). It participates in cofactor biosynthesis; thiamine diphosphate biosynthesis. Catalyzes the rearrangement of 1-deoxy-D-xylulose 5-phosphate (DXP) to produce the thiazole phosphate moiety of thiamine. Sulfur is provided by the thiocarboxylate moiety of the carrier protein ThiS. In vitro, sulfur can be provided by H(2)S. This Hahella chejuensis (strain KCTC 2396) protein is Thiazole synthase.